Consider the following 677-residue polypeptide: Glutamine--fructose-6-phosphate aminotransferase [isomerizing] 1 (677 aa).

The active-site Nucleophile is Cys-2. In terms of domain architecture, Glutamine amidotransferase type-2 spans 2-269 (CGIFAYLNFH…DGEVVNLKDG (268 aa)). SIS domains lie at 353–492 (HLKT…DTIS) and 524–667 (LAQL…VDQP). Residues 370-371 (TS), 415-417 (SQS), Thr-420, and His-571 contribute to the substrate site.

In terms of assembly, homotetramer, may also exist as homodimers. As to expression, highly expressed in flowers specifically in mature anthers, mature pollen grains and pollen tubes. Barely observed in roots, leaves and stems.

It catalyses the reaction D-fructose 6-phosphate + L-glutamine = D-glucosamine 6-phosphate + L-glutamate. The protein operates within nucleotide-sugar biosynthesis; UDP-N-acetyl-alpha-D-glucosamine biosynthesis; alpha-D-glucosamine 6-phosphate from D-fructose 6-phosphate: step 1/1. Functionally, controls the flux of glucose into the hexosamine biosynthetic pathway (HBP) leading to glucosamine (GlcN) content homeostasis. Involved in regulating the availability of precursors for N- and O-linked glycosylation of proteins. Required during pollen maturation and pollen tube formation by triggering polar deposition of pectin and callose in the pollen cell wall. Promotes tolerance to tunicamycin (Tm), an inhibitor of proteins N-glycosylation in endoplasmic reticulum (ER). This Arabidopsis thaliana (Mouse-ear cress) protein is Glutamine--fructose-6-phosphate aminotransferase [isomerizing] 1.